The chain runs to 237 residues: Demethylmenaquinone methyltransferase (237 aa).

Residues Thr-58, Asp-79, and 106-107 contribute to the S-adenosyl-L-methionine site; that span reads NA.

Belongs to the class I-like SAM-binding methyltransferase superfamily. MenG/UbiE family.

It carries out the reaction a 2-demethylmenaquinol + S-adenosyl-L-methionine = a menaquinol + S-adenosyl-L-homocysteine + H(+). It participates in quinol/quinone metabolism; menaquinone biosynthesis; menaquinol from 1,4-dihydroxy-2-naphthoate: step 2/2. In terms of biological role, methyltransferase required for the conversion of demethylmenaquinol (DMKH2) to menaquinol (MKH2). This is Demethylmenaquinone methyltransferase from Bacillus mycoides (strain KBAB4) (Bacillus weihenstephanensis).